The chain runs to 354 residues: UDP-N-acetylglucosamine--N-acetylmuramyl-(pentapeptide) pyrophosphoryl-undecaprenol N-acetylglucosamine transferase (354 aa).

UDP-N-acetyl-alpha-D-glucosamine contacts are provided by residues 15 to 17 (TGG), N127, R163, S191, I244, 263 to 268 (ALTVSE), and Q288.

This sequence belongs to the glycosyltransferase 28 family. MurG subfamily.

It is found in the cell inner membrane. It carries out the reaction di-trans,octa-cis-undecaprenyl diphospho-N-acetyl-alpha-D-muramoyl-L-alanyl-D-glutamyl-meso-2,6-diaminopimeloyl-D-alanyl-D-alanine + UDP-N-acetyl-alpha-D-glucosamine = di-trans,octa-cis-undecaprenyl diphospho-[N-acetyl-alpha-D-glucosaminyl-(1-&gt;4)]-N-acetyl-alpha-D-muramoyl-L-alanyl-D-glutamyl-meso-2,6-diaminopimeloyl-D-alanyl-D-alanine + UDP + H(+). The protein operates within cell wall biogenesis; peptidoglycan biosynthesis. Cell wall formation. Catalyzes the transfer of a GlcNAc subunit on undecaprenyl-pyrophosphoryl-MurNAc-pentapeptide (lipid intermediate I) to form undecaprenyl-pyrophosphoryl-MurNAc-(pentapeptide)GlcNAc (lipid intermediate II). The chain is UDP-N-acetylglucosamine--N-acetylmuramyl-(pentapeptide) pyrophosphoryl-undecaprenol N-acetylglucosamine transferase from Serratia proteamaculans (strain 568).